The sequence spans 427 residues: Trigger factor (427 aa).

The 81-residue stretch at 160 to 240 (TDTVIGDVEK…VKEVKRLELP (81 aa)) folds into the PPIase FKBP-type domain.

The protein belongs to the FKBP-type PPIase family. Tig subfamily.

Its subcellular location is the cytoplasm. The catalysed reaction is [protein]-peptidylproline (omega=180) = [protein]-peptidylproline (omega=0). In terms of biological role, involved in protein export. Acts as a chaperone by maintaining the newly synthesized protein in an open conformation. Functions as a peptidyl-prolyl cis-trans isomerase. This Chlorobium phaeobacteroides (strain DSM 266 / SMG 266 / 2430) protein is Trigger factor.